Here is a 454-residue protein sequence, read N- to C-terminus: MDLMMPNDSMFLFIESREHPMHVGGLSLFEPPQGAGPEFVREFTERLVANDEFQPMFRKHPATIGGGIARVAWAYDDDIDIDYHVRRSALPSPGRVRDLLELTSRLHTSLLDRHRPLWELHVVEGLNDGRFAMYTKMHHALIDGVSAMKLAQRTLSADPDDAEVRAIWNLPPRPRTRPPSDGSSLLDALFKMAGSVVGLAPSTLKLARAALLEQQLTLPFAAPHSMFNVKVGGARRCAAQSWSLDRIKSVKQAAGVTVNDAVLAMCAGALRYYLIERNALPDRPLIAMVPVSLRSKEDADAGGNLVGSVLCNLATHVDDPAQRIQTISASMDGNKKVLSELPQLQVLALSALNMAPLTLAGVPGFLSAVPPPFNIVISNVPGPVDPLYYGTARLDGSYPLSNIPDGQALNITLVNNAGNLDFGLVGCRRSVPHLQRLLAHLESSLKDLEQAVGI.

The Proton acceptor role is filled by His139.

Belongs to the long-chain O-acyltransferase family.

The enzyme catalyses an acyl-CoA + a 1,2-diacyl-sn-glycerol = a triacyl-sn-glycerol + CoA. It catalyses the reaction a long chain fatty alcohol + a fatty acyl-CoA = a wax ester + CoA. It participates in glycerolipid metabolism; triacylglycerol biosynthesis. Functionally, catalyzes the terminal and only committed step in triacylglycerol synthesis by using diacylglycerol and fatty acyl CoA as substrates. Required for storage lipid synthesis. In Mycobacterium tuberculosis (strain CDC 1551 / Oshkosh), this protein is Probable diacyglycerol O-acyltransferase tgs2 (tgs2).